The sequence spans 240 residues: Ribosomal RNA large subunit methyltransferase E (240 aa).

The segment covering 1 to 13 (MAKKPGSQNTSGR) has biased composition (polar residues). The tract at residues 1–20 (MAKKPGSQNTSGRGQRDLKV) is disordered. Residues Gly-85, Trp-87, Asp-113, Asp-129, and Asp-153 each coordinate S-adenosyl-L-methionine. Catalysis depends on Lys-193, which acts as the Proton acceptor.

This sequence belongs to the class I-like SAM-binding methyltransferase superfamily. RNA methyltransferase RlmE family.

It localises to the cytoplasm. It catalyses the reaction uridine(2552) in 23S rRNA + S-adenosyl-L-methionine = 2'-O-methyluridine(2552) in 23S rRNA + S-adenosyl-L-homocysteine + H(+). Functionally, specifically methylates the uridine in position 2552 of 23S rRNA at the 2'-O position of the ribose in the fully assembled 50S ribosomal subunit. This chain is Ribosomal RNA large subunit methyltransferase E, found in Roseobacter denitrificans (strain ATCC 33942 / OCh 114) (Erythrobacter sp. (strain OCh 114)).